A 127-amino-acid polypeptide reads, in one-letter code: Large ribosomal subunit protein bL17 (127 aa).

It belongs to the bacterial ribosomal protein bL17 family. Part of the 50S ribosomal subunit. Contacts protein L32.

The protein is Large ribosomal subunit protein bL17 of Lactobacillus gasseri (strain ATCC 33323 / DSM 20243 / BCRC 14619 / CIP 102991 / JCM 1131 / KCTC 3163 / NCIMB 11718 / NCTC 13722 / AM63).